Consider the following 132-residue polypeptide: Small ribosomal subunit protein uS12 (132 aa).

Asp89 carries the 3-methylthioaspartic acid modification. Positions 106–132 (GVKDRKKSRSKYGTKKPKEAAKTAAKK) are disordered. A compositionally biased stretch (basic residues) spans 109–120 (DRKKSRSKYGTK).

It belongs to the universal ribosomal protein uS12 family. In terms of assembly, part of the 30S ribosomal subunit. Contacts proteins S8 and S17. May interact with IF1 in the 30S initiation complex.

With S4 and S5 plays an important role in translational accuracy. Its function is as follows. Interacts with and stabilizes bases of the 16S rRNA that are involved in tRNA selection in the A site and with the mRNA backbone. Located at the interface of the 30S and 50S subunits, it traverses the body of the 30S subunit contacting proteins on the other side and probably holding the rRNA structure together. The combined cluster of proteins S8, S12 and S17 appears to hold together the shoulder and platform of the 30S subunit. This chain is Small ribosomal subunit protein uS12 (rpsL), found in Thermus thermophilus (strain ATCC BAA-163 / DSM 7039 / HB27).